We begin with the raw amino-acid sequence, 279 residues long: Pantothenate synthetase (279 aa).

31 to 38 is a binding site for ATP; that stretch reads MGNLHGGH. His-38 serves as the catalytic Proton donor. Gln-62 lines the (R)-pantoate pocket. Gln-62 is a binding site for beta-alanine. 150-153 lines the ATP pocket; sequence GRKD. Gln-156 is a binding site for (R)-pantoate. ATP is bound by residues Val-179 and 187–190; that span reads KSSR.

This sequence belongs to the pantothenate synthetase family. As to quaternary structure, homodimer.

The protein localises to the cytoplasm. The catalysed reaction is (R)-pantoate + beta-alanine + ATP = (R)-pantothenate + AMP + diphosphate + H(+). The protein operates within cofactor biosynthesis; (R)-pantothenate biosynthesis; (R)-pantothenate from (R)-pantoate and beta-alanine: step 1/1. Catalyzes the condensation of pantoate with beta-alanine in an ATP-dependent reaction via a pantoyl-adenylate intermediate. This is Pantothenate synthetase from Stenotrophomonas maltophilia (strain R551-3).